The chain runs to 1183 residues: Rab11 family-interacting protein 3 (1183 aa).

The interval Ala423–Thr448 is disordered. Residues Leu431–Lys441 show a composition bias toward basic and acidic residues. EF-hand domains lie at Glu706–Glu741 and Tyr738–Glu773. Residues Asp719, Asp721, Asp723, Glu730, Asp751, Ser753, and Asp762 each coordinate Ca(2+). Residues Glu902–Gln1121 adopt a coiled-coil conformation. The interval Glu911–Gln1015 is ARF-binding domain (ABD). The disordered stretch occupies residues Lys1005–Cys1044. An FIP-RBD domain is found at Gln1121 to Lys1183.

It localises to the recycling endosome membrane. The protein resides in the cytoplasm. It is found in the cytoskeleton. Its subcellular location is the microtubule organizing center. The protein localises to the centrosome. It localises to the cleavage furrow. The protein resides in the midbody. It is found in the golgi apparatus membrane. Its subcellular location is the golgi apparatus. The protein localises to the trans-Golgi network membrane. Downstream effector molecule for Rab11 GTPase which acts as a regulator of endocytic trafficking, cytokinesis and intracellular ciliogenesis by participating in membrane delivery. The sequence is that of Rab11 family-interacting protein 3 (rab11fip3) from Danio rerio (Zebrafish).